The sequence spans 149 residues: MKVLLLEDVKNLGKAGEVCEVKDGYGNNFLIANQKAKLATNEVINKYKAEVKKKAEKEALEKAQKLQMVETLQTITLTIHKKVGANGSLFGAITKEEITERLKEQHASLNLDKKDIELKHPIKSTGIYEIEVKLGSGIAGVFKIDVVAE.

Belongs to the bacterial ribosomal protein bL9 family.

Binds to the 23S rRNA. The protein is Large ribosomal subunit protein bL9 of Helicobacter pylori (strain J99 / ATCC 700824) (Campylobacter pylori J99).